The sequence spans 232 residues: Phosphatidylserine decarboxylase proenzyme (232 aa).

Ser-190 (schiff-base intermediate with substrate; via pyruvic acid) is an active-site residue. Ser-190 carries the pyruvic acid (Ser); by autocatalysis modification.

This sequence belongs to the phosphatidylserine decarboxylase family. PSD-A subfamily. In terms of assembly, heterodimer of a large membrane-associated beta subunit and a small pyruvoyl-containing alpha subunit. Pyruvate serves as cofactor. Is synthesized initially as an inactive proenzyme. Formation of the active enzyme involves a self-maturation process in which the active site pyruvoyl group is generated from an internal serine residue via an autocatalytic post-translational modification. Two non-identical subunits are generated from the proenzyme in this reaction, and the pyruvate is formed at the N-terminus of the alpha chain, which is derived from the carboxyl end of the proenzyme. The post-translation cleavage follows an unusual pathway, termed non-hydrolytic serinolysis, in which the side chain hydroxyl group of the serine supplies its oxygen atom to form the C-terminus of the beta chain, while the remainder of the serine residue undergoes an oxidative deamination to produce ammonia and the pyruvoyl prosthetic group on the alpha chain.

The protein resides in the cell membrane. The enzyme catalyses a 1,2-diacyl-sn-glycero-3-phospho-L-serine + H(+) = a 1,2-diacyl-sn-glycero-3-phosphoethanolamine + CO2. The protein operates within phospholipid metabolism; phosphatidylethanolamine biosynthesis; phosphatidylethanolamine from CDP-diacylglycerol: step 2/2. Its function is as follows. Catalyzes the formation of phosphatidylethanolamine (PtdEtn) from phosphatidylserine (PtdSer). The chain is Phosphatidylserine decarboxylase proenzyme from Sinorhizobium medicae (strain WSM419) (Ensifer medicae).